The following is a 208-amino-acid chain: Uridine kinase (208 aa).

Residue 12–19 (GGSGGGKT) participates in ATP binding.

This sequence belongs to the uridine kinase family.

It localises to the cytoplasm. The enzyme catalyses uridine + ATP = UMP + ADP + H(+). It catalyses the reaction cytidine + ATP = CMP + ADP + H(+). Its pathway is pyrimidine metabolism; CTP biosynthesis via salvage pathway; CTP from cytidine: step 1/3. It functions in the pathway pyrimidine metabolism; UMP biosynthesis via salvage pathway; UMP from uridine: step 1/1. The protein is Uridine kinase of Streptococcus pyogenes serotype M3 (strain ATCC BAA-595 / MGAS315).